Reading from the N-terminus, the 175-residue chain is ATP synthase subunit delta (175 aa).

The protein belongs to the ATPase delta chain family. F-type ATPases have 2 components, F(1) - the catalytic core - and F(0) - the membrane proton channel. F(1) has five subunits: alpha(3), beta(3), gamma(1), delta(1), epsilon(1). F(0) has three main subunits: a(1), b(2) and c(10-14). The alpha and beta chains form an alternating ring which encloses part of the gamma chain. F(1) is attached to F(0) by a central stalk formed by the gamma and epsilon chains, while a peripheral stalk is formed by the delta and b chains.

Its subcellular location is the cell inner membrane. F(1)F(0) ATP synthase produces ATP from ADP in the presence of a proton or sodium gradient. F-type ATPases consist of two structural domains, F(1) containing the extramembraneous catalytic core and F(0) containing the membrane proton channel, linked together by a central stalk and a peripheral stalk. During catalysis, ATP synthesis in the catalytic domain of F(1) is coupled via a rotary mechanism of the central stalk subunits to proton translocation. Functionally, this protein is part of the stalk that links CF(0) to CF(1). It either transmits conformational changes from CF(0) to CF(1) or is implicated in proton conduction. The polypeptide is ATP synthase subunit delta (Xanthomonas campestris pv. campestris (strain 8004)).